The sequence spans 295 residues: Glutamyl-Q tRNA(Asp) synthetase (295 aa).

L-glutamate-binding positions include 9-13 (RFAPT) and glutamate 45. The 'HIGH' region motif lies at 12 to 22 (PTPSGYLHFGS). Zn(2+) contacts are provided by cysteine 101, cysteine 103, tyrosine 115, and cysteine 119. Residues tyrosine 172 and arginine 190 each contribute to the L-glutamate site. A 'KMSKS' region motif is present at residues 228 to 232 (KLGKS). Position 231 (lysine 231) interacts with ATP.

This sequence belongs to the class-I aminoacyl-tRNA synthetase family. GluQ subfamily. It depends on Zn(2+) as a cofactor.

In terms of biological role, catalyzes the tRNA-independent activation of glutamate in presence of ATP and the subsequent transfer of glutamate onto a tRNA(Asp). Glutamate is transferred on the 2-amino-5-(4,5-dihydroxy-2-cyclopenten-1-yl) moiety of the queuosine in the wobble position of the QUC anticodon. This Pseudomonas syringae pv. syringae (strain B728a) protein is Glutamyl-Q tRNA(Asp) synthetase.